The following is a 170-amino-acid chain: Adenine phosphoribosyltransferase (170 aa).

Belongs to the purine/pyrimidine phosphoribosyltransferase family. In terms of assembly, homodimer.

It localises to the cytoplasm. The catalysed reaction is AMP + diphosphate = 5-phospho-alpha-D-ribose 1-diphosphate + adenine. It functions in the pathway purine metabolism; AMP biosynthesis via salvage pathway; AMP from adenine: step 1/1. Catalyzes a salvage reaction resulting in the formation of AMP, that is energically less costly than de novo synthesis. The polypeptide is Adenine phosphoribosyltransferase (Maridesulfovibrio salexigens (strain ATCC 14822 / DSM 2638 / NCIMB 8403 / VKM B-1763) (Desulfovibrio salexigens)).